A 1043-amino-acid chain; its full sequence is V(D)J recombination-activating protein 1 (1043 aa).

The segment at 1–288 (MAASFPPTLG…LAVDFPEHFV (288 aa)) is interaction with importin alpha-1. Residues 40–54 (KTPEEAQKEKKDSFE) are compositionally biased toward basic and acidic residues. The tract at residues 40-80 (KTPEEAQKEKKDSFEGKPSLEQSPAVLDKADGQKPVPTQPL) is disordered. K234 participates in a covalent cross-link: Glycyl lysine isopeptide (Lys-Gly) (interchain with G-Cter in ubiquitin). Zn(2+) contacts are provided by C269, H273, C293, C296, H298, C308, H310, C313, C316, C328, C331, C358, C363, H375, and H379. The segment at 293–332 (CQICEHILADPVETNCKHVFCRVCILRCLKVMGSYCPSCR) adopts an RING-type zinc-finger fold. An RAG1-type zinc finger spans residues 354 to 383 (LMVKCPAKECNEEVSLEKYNHHISSHKESK). The NBD DNA-binding region spans 392–459 (GGRPRQHLLS…QADELEAIMQ (68 aa)). Residues D603, D711, and E965 each contribute to the a divalent metal cation site.

It belongs to the RAG1 family. As to quaternary structure, homodimer. Component of the RAG complex composed of core components RAG1 and RAG2, and associated component HMGB1 or HMGB2. Interacts with DCAF1, leading to recruitment of the CUL4A-RBX1-DDB1-DCAF1/VPRBP complex to ubiquitinate proteins and limit error-prone repair during V(D)J recombination. Requires Mg(2+) as cofactor. Mn(2+) serves as cofactor. In terms of processing, autoubiquitinated in the presence of CDC34/UBCH3. Maturing lymphoid cells.

It is found in the nucleus. The catalysed reaction is S-ubiquitinyl-[E2 ubiquitin-conjugating enzyme]-L-cysteine + [acceptor protein]-L-lysine = [E2 ubiquitin-conjugating enzyme]-L-cysteine + N(6)-ubiquitinyl-[acceptor protein]-L-lysine.. Its function is as follows. Catalytic component of the RAG complex, a multiprotein complex that mediates the DNA cleavage phase during V(D)J recombination. V(D)J recombination assembles a diverse repertoire of immunoglobulin and T-cell receptor genes in developing B and T-lymphocytes through rearrangement of different V (variable), in some cases D (diversity), and J (joining) gene segments. In the RAG complex, RAG1 mediates the DNA-binding to the conserved recombination signal sequences (RSS) and catalyzes the DNA cleavage activities by introducing a double-strand break between the RSS and the adjacent coding segment. RAG2 is not a catalytic component but is required for all known catalytic activities. DNA cleavage occurs in 2 steps: a first nick is introduced in the top strand immediately upstream of the heptamer, generating a 3'-hydroxyl group that can attack the phosphodiester bond on the opposite strand in a direct transesterification reaction, thereby creating 4 DNA ends: 2 hairpin coding ends and 2 blunt, 5'-phosphorylated ends. The chromatin structure plays an essential role in the V(D)J recombination reactions and the presence of histone H3 trimethylated at 'Lys-4' (H3K4me3) stimulates both the nicking and haipinning steps. The RAG complex also plays a role in pre-B cell allelic exclusion, a process leading to expression of a single immunoglobulin heavy chain allele to enforce clonality and monospecific recognition by the B-cell antigen receptor (BCR) expressed on individual B-lymphocytes. The introduction of DNA breaks by the RAG complex on one immunoglobulin allele induces ATM-dependent repositioning of the other allele to pericentromeric heterochromatin, preventing accessibility to the RAG complex and recombination of the second allele. In addition to its endonuclease activity, RAG1 also acts as an E3 ubiquitin-protein ligase that mediates monoubiquitination of histone H3. Histone H3 monoubiquitination is required for the joining step of V(D)J recombination. Mediates polyubiquitination of KPNA1. The sequence is that of V(D)J recombination-activating protein 1 (RAG1) from Homo sapiens (Human).